Reading from the N-terminus, the 762-residue chain is Serine/threonine-protein kinase PLK4 (762 aa).

The region spanning 14–268 (YEVQHLLGKG…LEQVLRHPFM (255 aa)) is the Protein kinase domain. Residues 20-28 (LGKGGFACV) and Lys43 each bind ATP. The active-site Proton acceptor is the Asp139. In terms of domain architecture, Cryptic POLO box 1 (CPB1) spans 383 to 498 (AECISMPPLN…ARFVSLVKSK (116 aa)). A Cryptic POLO box 2 (CPB2) domain is found at 499 to 602 (TPKVTYFSGL…GRRPTPEVMP (104 aa)). In terms of domain architecture, POLO box spans 657-736 (PIKRLNVPGV…LPQVQMKLKS (80 aa)).

It belongs to the protein kinase superfamily. Ser/Thr protein kinase family. CDC5/Polo subfamily. In terms of assembly, homodimer. Post-translationally, ubiquitinated by the SCF(Slimb) ubiquitin ligase complex; leading to its degradation by the proteasome during interphase and regulating centriole number and ensuring the block to centriole reduplication.

It localises to the cytoplasm. It is found in the cytoskeleton. The protein localises to the microtubule organizing center. Its subcellular location is the centrosome. The protein resides in the centriole. It carries out the reaction L-seryl-[protein] + ATP = O-phospho-L-seryl-[protein] + ADP + H(+). The enzyme catalyses L-threonyl-[protein] + ATP = O-phospho-L-threonyl-[protein] + ADP + H(+). In terms of biological role, serine/threonine-protein kinase that plays a central role in centriole duplication. Able to trigger procentriole formation on the surface of the mother centriole cylinder, using mother centriole as a platform, leading to the recruitment of centriole biogenesis proteins such as sas-6. When overexpressed, it is able to induce centrosome amplification through the simultaneous generation of multiple procentrioles adjoining each parental centriole during S phase. Centrosome amplification following overexpression can initiate tumorigenesis, highlighting the importance of centrosome regulation in cancers. This is Serine/threonine-protein kinase PLK4 (SAK) from Drosophila grimshawi (Hawaiian fruit fly).